A 404-amino-acid chain; its full sequence is Protrudin (404 aa).

The disordered stretch occupies residues Met-1 to Cys-25. The Cytoplasmic segment spans residues Met-1 to Tyr-63. The sufficient for homooligomerization stretch occupies residues Met-1–Trp-92. The interval Met-1–Leu-205 is sufficient for localization to endoplasmic reticulum tubular network and for interactions with REEP1, REEP5, ATL1, ATL2, ATL3 and SPAST. Residues Leu-51–Leu-64 form a necessary for interaction with RAB11A and function in neurite outgrowth region. The chain crosses the membrane as a helical span at residues Leu-64–Leu-85. Topologically, residues Thr-86–Gly-90 are lumenal. The chain crosses the membrane as a helical span at residues Ala-91–Leu-109. Residues Gln-110–Gly-187 are Cytoplasmic-facing. An intramembrane region (helical) is located at residues Ala-188–Leu-208. At Asn-209–Lys-404 the chain is on the cytoplasmic side. Residues Asp-259–Pro-299 are disordered. Positions Thr-271–Lys-354 are necessary for interaction with KIF5A. A compositionally biased stretch (acidic residues) spans Glu-276–Pro-299. Positions Glu-286 to Glu-292 are necessary for interaction with VAPA. The segment at Thr-337 to Ser-403 adopts an FYVE-type zinc-finger fold. 8 residues coordinate Zn(2+): Cys-343, Cys-346, Cys-359, Cys-362, Cys-367, Cys-370, Cys-395, and Cys-398.

As to quaternary structure, can form homooligomers (monomers, dimers and tetramers). Interacts with FKBP8; may negatively regulate ZFYVE27 phosphorylation. Interacts with VAPA (via MSP domain); may regulate ZFYVE27 retention in the endoplasmic reticulum and its function in cell projections formation. Interacts with VAPB (via MSP domain). Interacts with RAB11A (GDP-bound form); regulates RAB11A. Interacts with RAB11B (GDP-bound form), REEP1, REEP5, ATL1, ATL2, ATL3, SPAST, SURF4, KIF5A, KIF5B, KIF5C and RTN3. Phosphorylated. Phosphorylation is induced by NGF through the MAPK/ERK pathway and modulates interaction with RAB11A.

It is found in the recycling endosome membrane. Its subcellular location is the endoplasmic reticulum membrane. The protein localises to the cell projection. The protein resides in the growth cone membrane. In terms of biological role, key regulator of RAB11-dependent vesicular trafficking during neurite extension through polarized membrane transport. Promotes axonal elongation and contributes to the establishment of neuronal cell polarity. Involved in nerve growth factor-induced neurite formation in VAPA-dependent manner. Contributes to both the formation and stabilization of the tubular ER network. Involved in ER morphogenesis by regulating the sheet-to-tubule balance and possibly the density of tubule interconnections. Acts as an adapter protein that facilitates the interaction of KIF5A with VAPA, VAPB, SURF4, RAB11A, RAB11B and RTN3 and the ZFYVE27-KIF5A complex contributes to the transport of these proteins in neurons. Can induce formation of neurite-like membrane protrusions in non-neuronal cells in a KIF5A/B-dependent manner. The sequence is that of Protrudin (Zfyve27) from Rattus norvegicus (Rat).